The primary structure comprises 54 residues: MPKGNRSIISLECTVCKERNYTTTKNKRKSQDKLELSKFCPRCRKHQDHKEGKV.

The protein belongs to the bacterial ribosomal protein bL33 family.

This is Large ribosomal subunit protein bL33A from Myxococcus xanthus (strain DK1622).